The sequence spans 545 residues: POTE ankyrin domain family member H (545 aa).

ANK repeat units lie at residues 180–208 (LHRAAWWGKVPRKDLIVMLKDTDMNKKDK), 209–238 (QKRTALHLASANGNSEVVKLLLDRRCQLNI), 242–271 (KKRTALTKAVQCQEDECALMLLEHGTDPNI), 275–304 (YGNTALHYAIYNEDKLMAKALLLYGADIES), 308–337 (HGLTPLLLGVHEQKQQVVKFLIKKKANLNA), 341–370 (YGRTALILAVCCGSASIVSLLLEQNIDVSS), and 374–404 (SGQTAREYAVSSRHNVICQLLSDYKEKQILK). The interval 406-524 (SSENSNPEQD…KQLSEEQNTG (119 aa)) is disordered. Composition is skewed to basic and acidic residues over residues 414 to 429 (QDLKLTSEEESQRLKG) and 443 to 458 (EINKGGDRKVEEEMKK). The segment covering 513-524 (TQKQLSEEQNTG) has biased composition (polar residues).

Belongs to the POTE family.

This Homo sapiens (Human) protein is POTE ankyrin domain family member H (POTEH).